We begin with the raw amino-acid sequence, 135 residues long: Putative pre-16S rRNA nuclease (135 aa).

The protein belongs to the YqgF nuclease family.

The protein resides in the cytoplasm. Could be a nuclease involved in processing of the 5'-end of pre-16S rRNA. The chain is Putative pre-16S rRNA nuclease from Clostridium novyi (strain NT).